Consider the following 772-residue polypeptide: TBC domain-containing protein C4G8.04 (772 aa).

Polar residues predominate over residues 143 to 161; that stretch reads SFFPSSQEPSIPENPSSLT. 2 disordered regions span residues 143–163 and 275–294; these read SFFP…LTGE and KFFR…TFVS. Low complexity predominate over residues 275 to 291; it reads KFFRSSPRCSTPSVSST. The residue at position 395 (Thr-395) is a Phosphothreonine. In terms of domain architecture, Rab-GAP TBC spans 504–693; it reads GVPLCYKAKV…RIFDMLFCDG (190 aa).

The protein is TBC domain-containing protein C4G8.04 of Schizosaccharomyces pombe (strain 972 / ATCC 24843) (Fission yeast).